Reading from the N-terminus, the 251-residue chain is 4-hydroxy-tetrahydrodipicolinate reductase (251 aa).

NAD(+) contacts are provided by residues 8–13 (GAKGRM), 76–78 (GTT), and 106–109 (APNF). The active-site Proton donor/acceptor is the H136. H137 is a (S)-2,3,4,5-tetrahydrodipicolinate binding site. Catalysis depends on K140, which acts as the Proton donor. 146–147 (GT) contributes to the (S)-2,3,4,5-tetrahydrodipicolinate binding site.

The protein belongs to the DapB family.

It localises to the cytoplasm. The catalysed reaction is (S)-2,3,4,5-tetrahydrodipicolinate + NAD(+) + H2O = (2S,4S)-4-hydroxy-2,3,4,5-tetrahydrodipicolinate + NADH + H(+). It carries out the reaction (S)-2,3,4,5-tetrahydrodipicolinate + NADP(+) + H2O = (2S,4S)-4-hydroxy-2,3,4,5-tetrahydrodipicolinate + NADPH + H(+). It functions in the pathway amino-acid biosynthesis; L-lysine biosynthesis via DAP pathway; (S)-tetrahydrodipicolinate from L-aspartate: step 4/4. Functionally, catalyzes the conversion of 4-hydroxy-tetrahydrodipicolinate (HTPA) to tetrahydrodipicolinate. This Bifidobacterium longum (strain NCC 2705) protein is 4-hydroxy-tetrahydrodipicolinate reductase.